The chain runs to 479 residues: Ammonium transporter Rh type C (479 aa).

Over Met-1–Trp-9 the chain is Cytoplasmic. A helical transmembrane segment spans residues Arg-10–Val-30. Topologically, residues Arg-31–Tyr-60 are extracellular. Residue Asn-48 is glycosylated (N-linked (GlcNAc...) asparagine). A helical transmembrane segment spans residues Pro-61 to Leu-81. The Cytoplasmic portion of the chain corresponds to Gln-82 to Gly-85. A helical membrane pass occupies residues Phe-86 to Met-106. At Gln-107 to Glu-123 the chain is on the extracellular side. A helical membrane pass occupies residues Asn-124–Gly-144. The Cytoplasmic segment spans residues Lys-145–Pro-148. A helical membrane pass occupies residues Ile-149 to Leu-169. The Extracellular segment spans residues Leu-170 to Asp-177. The helical transmembrane segment at Ala-178–Tyr-200 threads the bilayer. Residues Arg-201–Asp-218 lie on the Cytoplasmic side of the membrane. The chain crosses the membrane as a helical span at residues Leu-219–Ile-239. Residues Ser-240–Ala-250 are Extracellular-facing. A helical membrane pass occupies residues Ile-251–Leu-271. Over His-272–His-281 the chain is Cytoplasmic. Residues Ile-282 to Met-302 form a helical membrane-spanning segment. Pro-303 is a topological domain (extracellular). The helical transmembrane segment at Tyr-304–Leu-324 threads the bilayer. Topologically, residues Thr-325 to Gly-345 are cytoplasmic. Residues Ile-346–Val-366 traverse the membrane as a helical segment. Residues Tyr-367–Gln-394 are Extracellular-facing. A helical membrane pass occupies residues Ile-395–Ile-415. The Cytoplasmic segment spans residues Leu-416–Pro-479.

This sequence belongs to the ammonium transporter (TC 2.A.49) family. Rh subfamily. As to quaternary structure, homotrimer. Post-translationally, N-glycosylated.

The protein localises to the cell membrane. It localises to the apical cell membrane. The enzyme catalyses NH4(+)(in) = NH4(+)(out). It carries out the reaction methylamine(out) = methylamine(in). It catalyses the reaction CO2(out) = CO2(in). Ammonium transporter involved in the maintenance of acid-base homeostasis. Transports ammonium and its related derivative methylammonium across the plasma membrane of epithelial cells likely contributing to renal transepithelial ammonia transport and ammonia metabolism. Postulated to primarily mediate an electroneutral bidirectional transport of NH3 ammonia species according to a mechanism that implies interaction of an NH4(+) ion with acidic residues of the pore entry followed by dissociation of NH4(+) into NH3 and H(+). As a result NH3 transits through the central pore and is protonated on the extracellular side reforming NH4(+). May act as a CO2 channel providing for renal acid secretion. The polypeptide is Ammonium transporter Rh type C (RHCG) (Pan troglodytes (Chimpanzee)).